Reading from the N-terminus, the 271-residue chain is Urease accessory protein UreD (271 aa).

The protein belongs to the UreD family. As to quaternary structure, ureD, UreF and UreG form a complex that acts as a GTP-hydrolysis-dependent molecular chaperone, activating the urease apoprotein by helping to assemble the nickel containing metallocenter of UreC. The UreE protein probably delivers the nickel.

The protein resides in the cytoplasm. Its function is as follows. Required for maturation of urease via the functional incorporation of the urease nickel metallocenter. The chain is Urease accessory protein UreD from Azorhizobium caulinodans (strain ATCC 43989 / DSM 5975 / JCM 20966 / LMG 6465 / NBRC 14845 / NCIMB 13405 / ORS 571).